The chain runs to 120 residues: NAD(P)H-quinone oxidoreductase subunit 3, chloroplastic (120 aa).

Helical transmembrane passes span 9–29 (IFWAFLIISSAIPVLAFLISG), 64–84 (MFALVFVVFDVETVFLYPWAM), and 88–108 (VLGVSAFIEAFIFVLILILGL).

This sequence belongs to the complex I subunit 3 family. In terms of assembly, NDH is composed of at least 16 different subunits, 5 of which are encoded in the nucleus.

The protein resides in the plastid. The protein localises to the chloroplast thylakoid membrane. The enzyme catalyses a plastoquinone + NADH + (n+1) H(+)(in) = a plastoquinol + NAD(+) + n H(+)(out). It carries out the reaction a plastoquinone + NADPH + (n+1) H(+)(in) = a plastoquinol + NADP(+) + n H(+)(out). NDH shuttles electrons from NAD(P)H:plastoquinone, via FMN and iron-sulfur (Fe-S) centers, to quinones in the photosynthetic chain and possibly in a chloroplast respiratory chain. The immediate electron acceptor for the enzyme in this species is believed to be plastoquinone. Couples the redox reaction to proton translocation, and thus conserves the redox energy in a proton gradient. The chain is NAD(P)H-quinone oxidoreductase subunit 3, chloroplastic from Capsella bursa-pastoris (Shepherd's purse).